The chain runs to 303 residues: Aspartate carbamoyltransferase catalytic subunit (303 aa).

The carbamoyl phosphate site is built by arginine 49 and threonine 50. Lysine 77 contributes to the L-aspartate binding site. Carbamoyl phosphate-binding residues include arginine 99, histidine 126, and glutamine 129. L-aspartate is bound by residues arginine 159 and arginine 211. Carbamoyl phosphate is bound by residues serine 252 and proline 253.

The protein belongs to the aspartate/ornithine carbamoyltransferase superfamily. ATCase family. As to quaternary structure, heterododecamer (2C3:3R2) of six catalytic PyrB chains organized as two trimers (C3), and six regulatory PyrI chains organized as three dimers (R2).

The catalysed reaction is carbamoyl phosphate + L-aspartate = N-carbamoyl-L-aspartate + phosphate + H(+). The protein operates within pyrimidine metabolism; UMP biosynthesis via de novo pathway; (S)-dihydroorotate from bicarbonate: step 2/3. In terms of biological role, catalyzes the condensation of carbamoyl phosphate and aspartate to form carbamoyl aspartate and inorganic phosphate, the committed step in the de novo pyrimidine nucleotide biosynthesis pathway. The protein is Aspartate carbamoyltransferase catalytic subunit of Listeria monocytogenes serovar 1/2a (strain ATCC BAA-679 / EGD-e).